A 111-amino-acid polypeptide reads, in one-letter code: WAP four-disulfide core domain protein 12 (111 aa).

Positions methionine 1 to glycine 23 are cleaved as a signal peptide. Residues asparagine 27–valine 74 form the WAP domain. 4 disulfide bridges follow: cysteine 34–cysteine 62, cysteine 41–cysteine 66, cysteine 49–cysteine 61, and cysteine 55–cysteine 70.

The protein resides in the secreted. Its function is as follows. Antibacterial protein. Putative acid-stable proteinase inhibitor. This Saimiri boliviensis boliviensis (Bolivian squirrel monkey) protein is WAP four-disulfide core domain protein 12 (WFDC12).